A 640-amino-acid polypeptide reads, in one-letter code: uncharacterized protein (640 aa).

Residues 594–614 (QCSSDHCKPGSSETLPEATNE) are disordered.

This is an uncharacterized protein from Rattus norvegicus (Rat).